A 217-amino-acid polypeptide reads, in one-letter code: 3-oxoadipate CoA-transferase subunit B (217 aa).

Residue Glu50 is part of the active site.

This sequence belongs to the 3-oxoacid CoA-transferase subunit B family. In terms of assembly, heterodimer.

It catalyses the reaction 3-oxoadipate + succinyl-CoA = 3-oxoadipyl-CoA + succinate. It functions in the pathway aromatic compound metabolism; beta-ketoadipate pathway; acetyl-CoA and succinyl-CoA from 3-oxoadipate: step 1/2. In Acinetobacter baylyi (strain ATCC 33305 / BD413 / ADP1), this protein is 3-oxoadipate CoA-transferase subunit B (pcaJ).